Reading from the N-terminus, the 255-residue chain is Cobalt-precorrin-6A reductase (255 aa).

Belongs to the precorrin-6x reductase family.

It carries out the reaction Co-precorrin-6B + NAD(+) = Co-precorrin-6A + NADH + H(+). Its pathway is cofactor biosynthesis; adenosylcobalamin biosynthesis; cob(II)yrinate a,c-diamide from sirohydrochlorin (anaerobic route): step 7/10. Its function is as follows. Catalyzes the reduction of the macrocycle of cobalt-precorrin-6A to cobalt-precorrin-6B. The polypeptide is Cobalt-precorrin-6A reductase (cbiJ) (Priestia megaterium (Bacillus megaterium)).